Reading from the N-terminus, the 154-residue chain is Transcription antitermination protein NusB (154 aa).

Belongs to the NusB family.

Its function is as follows. Involved in transcription antitermination. Required for transcription of ribosomal RNA (rRNA) genes. Binds specifically to the boxA antiterminator sequence of the ribosomal RNA (rrn) operons. This is Transcription antitermination protein NusB from Rickettsia typhi (strain ATCC VR-144 / Wilmington).